The primary structure comprises 491 residues: Katanin p60 ATPase-containing subunit A1 (491 aa).

The interval 1–29 is interaction with KATNB1; sequence MSLQMIVENVKLAREYALLGNYDSAMVYY. An interaction with dynein and NDEL1 region spans residues 1-75; the sequence is MSLQMIVENV…VKDIMKTLES (75 aa). The interaction with microtubules; sufficient for microtubule severing activity stretch occupies residues 1 to 185; it reads MSLQMIVENV…EPEANKFDGT (185 aa). Ser-42 carries the phosphoserine; by DYRK2 modification. A disordered region spans residues 101–182; that stretch reads PVPVERRPLP…AVTEPEANKF (82 aa). The span at 145–169 shows a compositional bias: basic and acidic residues; sequence HNDRGKAVRSREKKEQSKGREEKNK. 249 to 256 is a binding site for ATP; it reads GPPGTGKT.

Belongs to the AAA ATPase family. Katanin p60 subunit A1 subfamily. Can homooligomerize into hexameric rings, which may be promoted by interaction with microtubules. Interacts with KATNB1, which may serve as a targeting subunit. Interacts with ASPM; the katanin complex formation KATNA1:KATNB1 is required for the association of ASPM. Interacts with dynein and NDEL1. Associates with the E3 ligase complex containing DYRK2, EDD/UBR5, DDB1 and DCAF1 proteins (EDVP complex). Interacts with KLHL42 (via the kelch domains). Interacts with CUL3; the interaction is enhanced by KLHL42. Interacts with KATNB1 and KATNBL1. Interacts with CAMSAP2 and CAMSAP3; leading to regulate the length of CAMSAP-decorated microtubule stretches. Post-translationally, phosphorylation by DYRK2 triggers ubiquitination and subsequent degradation. In terms of processing, ubiquitinated by the BCR(KLHL42) E3 ubiquitin ligase complex, leading to its proteasomal degradation. Ubiquitinated by the EDVP E3 ligase complex and subsequently targeted for proteasomal degradation.

Its subcellular location is the cytoplasm. It is found in the midbody. The protein localises to the cytoskeleton. It localises to the microtubule organizing center. The protein resides in the centrosome. Its subcellular location is the spindle pole. It is found in the spindle. The enzyme catalyses n ATP + n H2O + a microtubule = n ADP + n phosphate + (n+1) alpha/beta tubulin heterodimers.. Its activity is regulated as follows. ATPase activity is stimulated by microtubules, which promote homooligomerization. ATP-dependent microtubule severing is stimulated by interaction with KATNB1. Its function is as follows. Catalytic subunit of a complex which severs microtubules in an ATP-dependent manner. Microtubule severing may promote rapid reorganization of cellular microtubule arrays and the release of microtubules from the centrosome following nucleation. Microtubule release from the mitotic spindle poles may allow depolymerization of the microtubule end proximal to the spindle pole, leading to poleward microtubule flux and poleward motion of chromosome. The function in regulating microtubule dynamics at spindle poles seems to depend on the association of the katanin KATNA1:KATNB1 complex with ASPM which recruits it to microtubules. Reversely KATNA1:KATNB1 can enhance ASPM blocking activity on microtubule minus-end growth. Microtubule release within the cell body of neurons may be required for their transport into neuronal processes by microtubule-dependent motor proteins. This transport is required for axonal growth. This chain is Katanin p60 ATPase-containing subunit A1 (Katna1), found in Mus musculus (Mouse).